We begin with the raw amino-acid sequence, 268 residues long: Glutamine amidotransferase-like class 1 domain-containing protein 3, mitochondrial (268 aa).

A mitochondrion-targeting transit peptide spans 1 to 41 (MAAVRVLVASRLAAASAFTSLSPGGRTPSQRAALHLSVPRP). Lysine 151, lysine 157, and lysine 164 each carry N6-acetyllysine. The residue at position 203 (lysine 203) is an N6-acetyllysine; alternate. Lysine 203 carries the post-translational modification N6-succinyllysine; alternate. Lysine 219 bears the N6-acetyllysine mark. An N6-acetyllysine; alternate mark is found at lysine 223 and lysine 233. Lysine 223 and lysine 233 each carry N6-succinyllysine; alternate.

The protein belongs to the GATD3 family.

The protein resides in the mitochondrion. This Homo sapiens (Human) protein is Glutamine amidotransferase-like class 1 domain-containing protein 3, mitochondrial.